Consider the following 144-residue polypeptide: Large ribosomal subunit protein uL15 (144 aa).

Residues 1 to 62 are disordered; sequence MELNNLKPAE…GQMPLQRRLP (62 aa). The span at 21 to 31 shows a compositional bias: gly residues; it reads RGIGSGLGKTA.

The protein belongs to the universal ribosomal protein uL15 family. In terms of assembly, part of the 50S ribosomal subunit.

Functionally, binds to the 23S rRNA. The chain is Large ribosomal subunit protein uL15 from Paraburkholderia phymatum (strain DSM 17167 / CIP 108236 / LMG 21445 / STM815) (Burkholderia phymatum).